A 240-amino-acid polypeptide reads, in one-letter code: T4 protein (240 aa).

It belongs to the poxviruses B9 family.

The sequence is that of T4 protein from Sheeppox virus (strain InS-1) (SPPV).